The following is a 186-amino-acid chain: Protein C (186 aa).

The segment covering 1-12 has biased composition (polar residues); it reads MSKTDWNASGPS. The segment at 1–43 is disordered; that stretch reads MSKTDWNASGPSRPSPSAHWPSGKLWQHGQKYQTTQDRSRPPA.

This sequence belongs to the morbillivirus protein C family. Interacts with the phosphoprotein (via C-terminus); this interaction allows C to associate with the ribonucleocapsid.

The protein resides in the host nucleus. It localises to the host cytoplasmic vesicle. Its function is as follows. Ribonucleocapsid-associated protein that interacts with the phosphoprotein (P), thereby increasing replication accuracy and processivity of the polymerase complex. The polypeptide is Protein C (P/V/C) (Homo sapiens (Human)).